A 214-amino-acid chain; its full sequence is Osteoclast-stimulating factor 1 (214 aa).

The residue at position 2 (Ser-2) is an N-acetylserine. Residues 12–71 enclose the SH3 domain; that stretch reads GQVKVFRALYTFEPRTPDELYFEEGDIIYITDMSDTNWWKGTCKGRTGLIPSNYVAEQAE. 3 ANK repeats span residues 72-101, 105-135, and 139-168; these read SIDN…GVNG, AGST…ELNQ, and LGDT…RTDL. 2 positions are modified to phosphoserine: Ser-202 and Ser-213.

In terms of assembly, interacts with SRC and SMN1. Interacts with FASLG.

The protein resides in the cytoplasm. In terms of biological role, induces bone resorption, acting probably through a signaling cascade which results in the secretion of factor(s) enhancing osteoclast formation and activity. This Bos taurus (Bovine) protein is Osteoclast-stimulating factor 1 (OSTF1).